Consider the following 266-residue polypeptide: Proteasome subunit alpha type-1 (266 aa).

Residues 235–266 (DGFKTRPEDIPAVADNEEDDDELHEQPPDVEE) form a disordered region. Positions 249-266 (DNEEDDDELHEQPPDVEE) are enriched in acidic residues.

The protein belongs to the peptidase T1A family. The 26S proteasome consists of a 20S proteasome core and two 19S regulatory subunits. The 20S proteasome core is composed of 28 subunits that are arranged in four stacked rings, resulting in a barrel-shaped structure. The two end rings are each formed by seven alpha subunits, and the two central rings are each formed by seven beta subunits. The catalytic chamber with the active sites is on the inside of the barrel.

The protein localises to the cytoplasm. The protein resides in the nucleus. Its function is as follows. The proteasome is a multicatalytic proteinase complex which is characterized by its ability to cleave peptides with Arg, Phe, Tyr, Leu, and Glu adjacent to the leaving group at neutral or slightly basic pH. The proteasome has an ATP-dependent proteolytic activity. The sequence is that of Proteasome subunit alpha type-1 from Trypanosoma brucei rhodesiense.